A 347-amino-acid polypeptide reads, in one-letter code: Homeobox protein knotted-1-like 9 (347 aa).

Over residues 1 to 17 (MESFASLAGGGSSSTTA) the composition is skewed to low complexity. Disordered regions lie at residues 1 to 36 (MESFASLAGGGSSSTTARLPELIPPENPDRISPPPL), 122 to 145 (QQLDAADGHPRRRHEPRRDDDVPD), and 179 to 206 (DSNCEGTGSSEEEQDTSCPEAEEIDPSD). Over residues 22–36 (LIPPENPDRISPPPL) the composition is skewed to pro residues. Acidic residues predominate over residues 188–203 (SEEEQDTSCPEAEEID). Positions 208 to 228 (QLKHQLLMKYGGSLGDLRQAF) constitute an ELK domain. The homeobox; TALE-type DNA-binding region spans 229 to 293 (SKRTKKGKLP…NQRKRHWKPT (65 aa)).

Belongs to the TALE/KNOX homeobox family.

The protein localises to the nucleus. This Oryza sativa subsp. japonica (Rice) protein is Homeobox protein knotted-1-like 9.